A 1431-amino-acid chain; its full sequence is MDVTKKNKRDGTEVTERIVTEIVTTRLTSLPPKGSTSNGYAKTGSLGGGSRLEKQSLTHGSSGYINSSGSIRGNASTSSYRRAHSPASTLPNSPGSTFERKTHMTRHGTYEGSSSGNSSPEYPRKELASSATRGRSQTRESEIRVRLQSASPSTRWTELDEVKRLLKGSRSASASPTRNTSSTLPIPKKGTVETKMVTASSHSVSGTYDTTALDTNLPSHMWSSTLPAGSSMGTYHNNMTTQSSSLLNTNAYSAGSVFGMPNNMASCSPTLLPGLSSCSSVFGMQNNLAPSSSVPAHGTTTAPTAYGVKKNVPQPPTVTSTGVSTSATCTTSVQSDDLLHKDCKFLILEKDNVPSKKEMELLIMTKDSGKVFTASPASVSTTSFSEDTLKKEKQAAYAADACLKADINGDLNTVSTKGKATSVENHNYDRGGGSGGGARGGGGSGGGGGGGGTWGAAPAWCPCGSCCSWWKWLLGLLLTWLLLLGLLFGLIALAEEVRKLKARVDELERTRVQYFEDKTERSSKDRLLGDMPGVGPGLGKAELDGHSQEAIWLFVRNKLMTEQENGNLRGNPGPKGDMGSQGPKGDRGLPGTAGIPGPLGHPGPEGPKGQKGSIGDPGMEGPIGQRGLEGPMGPRGEPGPPGSGEKGDRGIAGEQGPRGLPGVPGSVGPRGPNGSPGPQGPPGSTGPQGLRGEVGLPGVKGDKGLAGPPGPKGDQGEKGPRGLTGEPGVRGLPGAVGEPGAKGAMGPAGPDGQQGPRGEQGLTGMPGTRGLPGPSGDPGKPGVTGPQGPQGLPGSPGRPGTKGEPGAPGRVMTAEGSSTITVPGPPGPPGAMGPPGPSGTPGPAGPAGLPGQTKAQRGEPGLAGDSFISSGSSISEVLAAQGVDLRGPLGPPGPRGPPGPSIPGPPGPRGPPGEGVPGPPGLPGSFLTDSETFFSGPPGPPGPPGPKGDQGDPGVPGTPGIPGGHSHGESSSTTYRQGPPGPPGPPGPPGSFSSSGQDIQRYIAEYMQSDSIRTYLSGVQGPPGPPGPPGPVITITGETFDYSQLASQVVSYLRTSGYGVSLSSASSEDILAMLRRNDVWQFLRQHLVGPPGPPGPPGVGGDGSLLSLDYGELSRHILNYMSSSGISFGHPGPPGPPGLPGTSYEELLTMLRGSDYRDIIGPPGPPGPPGPRGPPGVSAALATYAAENSDNFRSELIGYLTSPDVRSFIIGPPGPPGPQGPPGDSHLRDNYSWGSSSSARRGTAYSSSVGMGGANGGSLGEGRTFGTGDGGPYGTDIGPGGGYGAAAGGIYGTDGDSFRAGFTGDLDYNKLAVRVSESMQRQGLLQGMAYTVQGPPGVPGPQGPPGISKVFSAYSNVTQDLMDFFRTHGAIPGPPGQKGEAGTPGPKGDRGLAGQRGPPGPPGPRGQKGDKGDKGDQVYTGRRRRSIAIKP.

Residues 1–468 lie on the Cytoplasmic side of the membrane; the sequence is MDVTKKNKRD…AWCPCGSCCS (468 aa). A nonhelical region (NC16) region spans residues 1-569; that stretch reads MDVTKKNKRD…MTEQENGNLR (569 aa). 4 disordered regions span residues 25 to 155, 167 to 188, 304 to 324, and 422 to 449; these read TRLT…PSTR, KGSRSASASPTRNTSSTLPIPK, TAYGVKKNVPQPPTVTSTGVS, and SVENHNYDRGGGSGGGARGGGGSGGGGG. Over residues 60-74 the composition is skewed to low complexity; that stretch reads GSSGYINSSGSIRGN. Polar residues-rich tracts occupy residues 75–96, 111–120, and 170–184; these read ASTSSYRRAHSPASTLPNSPGS, EGSSSGNSSP, and RSASASPTRNTSSTL. The interval 146-231 is necessary for interaction with DST and for the recruitment of DST to hemidesmosome; sequence RLQSASPSTR…WSSTLPAGSS (86 aa). The span at 430 to 449 shows a compositional bias: gly residues; it reads RGGGSGGGARGGGGSGGGGG. Residues 469 to 489 form a helical; Signal-anchor for type II membrane protein membrane-spanning segment; sequence WWKWLLGLLLTWLLLLGLLFG. Over 490–1431 the chain is Extracellular; that stretch reads LIALAEEVRK…RRRRSIAIKP (942 aa). S547 carries the post-translational modification Phosphoserine; by CK2. Disordered regions lie at residues 564–869, 884–996, 1158–1178, and 1208–1249; these read ENGN…SFIS, DLRG…SSSG, DIIGPPGPPGPPGPRGPPGVS, and FIIG…SSSV. A triple-helical region region spans residues 570-1417; it reads GNPGPKGDMG…KGDKGDKGDQ (848 aa). Composition is skewed to low complexity over residues 657–673, 738–751, and 778–799; these read PRGLPGVPGSVGPRGPN, EPGAKGAMGPAGPD, and PGKPGVTGPQGPQGLPGSPGRP. Pro residues-rich tracts occupy residues 823 to 844, 889 to 911, 937 to 946, 979 to 989, 1162 to 1174, and 1212 to 1221; these read PGPPGPPGAMGPPGPSGTPGPA, LGPPGPRGPPGPSIPGPPGPRGP, PPGPPGPPGP, PPGPPGPPGPP, PPGPPGPPGPRGP, and PPGPPGPQGP. N1230 is a glycosylation site (N-linked (GlcNAc...) asparagine). Polar residues predominate over residues 1232-1249; that stretch reads SWGSSSSARRGTAYSSSV. N1356 is a glycosylation site (N-linked (GlcNAc...) asparagine). The tract at residues 1366–1431 is disordered; sequence RTHGAIPGPP…RRRRSIAIKP (66 aa). Basic and acidic residues predominate over residues 1407-1416; it reads QKGDKGDKGD. The segment at 1418 to 1431 is nonhelical region (NC1); that stretch reads VYTGRRRRSIAIKP. Positions 1421-1431 are enriched in basic residues; that stretch reads GRRRRSIAIKP.

In terms of assembly, homotrimers of alpha 1(XVII)chains. Interacts (via cytoplasmic region) with ITGB4 (via cytoplasmic region). Interacts (via cytoplasmic region) with DST (via N-terminus). Interacts (via N-terminus) with PLEC. Interacts (via cytoplasmic region) with DSP. In terms of processing, the intracellular/endo domain is disulfide-linked. Prolines at the third position of the tripeptide repeating unit (G-X-Y) are hydroxylated in some or all of the chains. Post-translationally, the ectodomain is shedded from the surface of keratinocytes resulting in a 120-kDa soluble form, also named as 120 kDa linear IgA disease antigen homolog. The shedding is mediated by membrane-bound metalloproteases. This cleavage is inhibited by phosphorylation at Ser-547.

The protein localises to the cell junction. It localises to the hemidesmosome. Its subcellular location is the membrane. The protein resides in the secreted. It is found in the extracellular space. The protein localises to the extracellular matrix. It localises to the basement membrane. In terms of biological role, may play a role in the integrity of hemidesmosome and the attachment of basal keratinocytes to the underlying basement membrane. Its function is as follows. The 120 kDa linear IgA disease antigen homolog is an anchoring filament component involved in dermal-epidermal cohesion. The chain is Collagen alpha-1(XVII) chain (COL17A1) from Mesocricetus auratus (Golden hamster).